Reading from the N-terminus, the 63-residue chain is Bowman-Birk type proteinase inhibitor (63 aa).

7 disulfide bridges follow: C8-C61, C9-C24, C12-C57, C14-C22, C31-C38, C35-C50, and C40-C48.

It belongs to the Bowman-Birk serine protease inhibitor family.

This inhibitor has two domains, each with separate antiprotease activity. Inhibits bovine trypsin and chymotrypsin, in a molar ratio of 1:1. The trypsin inhibition of FBI is independent of chymotrypsin inhibition, but the chymotrypsin inhibition is not completely independent of trypsin inhibition. The sequence is that of Bowman-Birk type proteinase inhibitor from Vicia faba (Broad bean).